The chain runs to 440 residues: MKRSLHLTFVCLSLFSARMCVQGNQFNIEVSRSNKLSLPGFENLTAGYNKFLRPNFGGEPVQIALTLDVASISSISESNMDYTATIYLRQRWTDQRLVFEGNKSFTLDARLVEFLWVPDTYIVESKKSFLHEVTVGNRLIRLFSNGTVLYALRITTTVACNMDLSKYPMDTQTCKLQLESWGYDGNDVEFSWLRGNDSVRGLENLRLAQYTIQQYFTSVTRSQQETGNYTRLVLQFELQRNVLYFILETYVPSTFLVVLSWVSFWISLDSVPARTCIGVTTVLSMTTLMIGSRTSLPNTNCFIKAIDVYLGICFSFVFGALLEYAVAHYSSLQQMAAKDRGKAKEVEEVNITNIINSSISSFKRKISFASIEISGDNVDYSDLTMKTSDKVKFVFRDKLGRIVDYFTIQNPSNVDRYSKLLFPLIFMLANVFYWAYYMYF.

The first 23 residues, 1-23, serve as a signal peptide directing secretion; that stretch reads MKRSLHLTFVCLSLFSARMCVQG. Residues 24–241 lie on the Extracellular side of the membrane; the sequence is NQFNIEVSRS…LVLQFELQRN (218 aa). N-linked (GlcNAc...) asparagine glycosylation is found at Asn43, Asn102, and Asn145. An intrachain disulfide couples Cys160 to Cys174. Asn196 and Asn228 each carry an N-linked (GlcNAc...) asparagine glycan. Residues 242–262 traverse the membrane as a helical segment; that stretch reads VLYFILETYVPSTFLVVLSWV. Residues 263-270 are Cytoplasmic-facing; it reads SFWISLDS. The chain crosses the membrane as a helical span at residues 271–290; it reads VPARTCIGVTTVLSMTTLMI. Residues 291–301 are Extracellular-facing; that stretch reads GSRTSLPNTNC. The chain crosses the membrane as a helical span at residues 302–322; sequence FIKAIDVYLGICFSFVFGALL. Residues 323 to 419 are Cytoplasmic-facing; it reads EYAVAHYSSL…NPSNVDRYSK (97 aa). A helical membrane pass occupies residues 420-440; that stretch reads LLFPLIFMLANVFYWAYYMYF.

This sequence belongs to the ligand-gated ion channel (TC 1.A.9) family. Gamma-aminobutyric acid receptor (TC 1.A.9.5) subfamily. GABRP sub-subfamily. As to quaternary structure, heteropentamer, formed by a combination of alpha (GABRA1-6), beta (GABRB1-3), gamma (GABRG1-3), delta (GABRD), epsilon (GABRE), rho (GABRR1-3), pi (GABRP) and theta (GABRQ) chains, each subunit exhibiting distinct physiological and pharmacological properties.

The protein resides in the cell membrane. It localises to the apical cell membrane. The enzyme catalyses chloride(in) = chloride(out). Pi subunit of the heteropentameric ligand-gated chloride channel gated by gamma-aminobutyric acid (GABA). GABA-gated chloride channels, also named GABA(A) receptors (GABAAR), consist of five subunits arranged around a central pore and contain GABA active binding site(s) located at the alpha and beta subunit interfaces. When activated by GABA, GABAARs selectively allow the flow of chloride anions across the cell membrane down their electrochemical gradient. Pi-containing GABAARs are mostly located in peripheral tissues. In the uterus, pi subunits modulate uterus contraction by altering the sensitivity of GABAARs to pregnanolone. In the lungs, pi-containing GABAARs contribute to pulmonary fluid transport via luminal secretion of chloride. The polypeptide is Gamma-aminobutyric acid receptor subunit pi (GABRP) (Bos taurus (Bovine)).